A 410-amino-acid chain; its full sequence is Ribosomal RNA large subunit methyltransferase G (410 aa).

The protein belongs to the methyltransferase superfamily. RlmG family.

Its subcellular location is the cytoplasm. The enzyme catalyses guanosine(1835) in 23S rRNA + S-adenosyl-L-methionine = N(2)-methylguanosine(1835) in 23S rRNA + S-adenosyl-L-homocysteine + H(+). Functionally, specifically methylates the guanine in position 1835 (m2G1835) of 23S rRNA. This Alteromonas mediterranea (strain DSM 17117 / CIP 110805 / LMG 28347 / Deep ecotype) protein is Ribosomal RNA large subunit methyltransferase G.